Reading from the N-terminus, the 261-residue chain is Putative methyltransferase MJ0046 (261 aa).

This sequence belongs to the methyltransferase superfamily.

In Methanocaldococcus jannaschii (strain ATCC 43067 / DSM 2661 / JAL-1 / JCM 10045 / NBRC 100440) (Methanococcus jannaschii), this protein is Putative methyltransferase MJ0046.